Here is a 486-residue protein sequence, read N- to C-terminus: Serine/threonine-protein phosphatase 2A 56 kDa regulatory subunit alpha isoform (486 aa).

The residue at position 2 (S2) is an N-acetylserine. Positions 22–52 (DGFTRKSVRKAQRQKRSQGSSQFRSQGSQAE) are disordered. Basic residues predominate over residues 27–37 (KSVRKAQRQKR). Residues 38–51 (SQGSSQFRSQGSQA) are compositionally biased toward low complexity. A phosphoserine mark is found at S41, S42, and S49.

This sequence belongs to the phosphatase 2A regulatory subunit B56 family. PP2A consists of a common heterodimeric core enzyme, composed of a 36 kDa catalytic subunit (subunit C) and a 65 kDa constant regulatory subunit (PR65 or subunit A), that associates with a variety of regulatory subunits. Proteins that associate with the core dimer include three families of regulatory subunits B (the R2/B/PR55/B55, R3/B''/PR72/PR130/PR59 and R5/B'/B56 families), the 48 kDa variable regulatory subunit, viral proteins, and cell signaling molecules. Interacts with SGO1. Widely expressed with highest levels in thymus and ovary.

The protein localises to the cytoplasm. The protein resides in the nucleus. It localises to the chromosome. It is found in the centromere. In terms of biological role, the B regulatory subunit might modulate substrate selectivity and catalytic activity, and might also direct the localization of the catalytic enzyme to a particular subcellular compartment. The protein is Serine/threonine-protein phosphatase 2A 56 kDa regulatory subunit alpha isoform (Ppp2r5a) of Mus musculus (Mouse).